The primary structure comprises 354 residues: Ornithine carbamoyltransferase, catabolic (354 aa).

Carbamoyl phosphate is bound by residues 67 to 70, Gln94, Arg118, and 145 to 148; these read STRT and HPTQ. Residues Asn177, Asp241, and 245–246 contribute to the L-ornithine site; that span reads SM. Carbamoyl phosphate contacts are provided by residues 284-285 and Arg329; that span reads CL.

This sequence belongs to the aspartate/ornithine carbamoyltransferase superfamily. OTCase family.

It is found in the cytoplasm. The enzyme catalyses carbamoyl phosphate + L-ornithine = L-citrulline + phosphate + H(+). It participates in amino-acid degradation; L-arginine degradation via ADI pathway; carbamoyl phosphate from L-arginine: step 2/2. In terms of biological role, reversibly catalyzes the transfer of the carbamoyl group from carbamoyl phosphate (CP) to the N(epsilon) atom of ornithine (ORN) to produce L-citrulline. This chain is Ornithine carbamoyltransferase, catabolic (arcB), found in Lactococcus lactis subsp. cremoris (strain MG1363).